We begin with the raw amino-acid sequence, 838 residues long: Phosphatidylethanolamine N-methyltransferase 1 (838 aa).

Over 1-48 the chain is Lumenal; that stretch reads MATEIITEKKEIVARTRSSGITFNPPVTHDMVRSLFDPTIKKSFLECC. Residues 49–69 traverse the membrane as a helical segment; sequence ITLTILANFVLCYYLINWFGL. The Cytoplasmic portion of the chain corresponds to 70–73; that stretch reads SQAK. Residues 74-94 form a helical membrane-spanning segment; that stretch reads LIFLIQYVYWRLAYNLGIGII. The Lumenal segment spans residues 95-157; sequence LHYQSHYESL…ELNCWLLFRQ (63 aa). A helical membrane pass occupies residues 158-178; sequence FVDLILMQDFTTYIIYVYLSL. Residues 179-184 lie on the Cytoplasmic side of the membrane; the sequence is PTDVSS. Residues 185–205 traverse the membrane as a helical segment; the sequence is LINWKSLIGIAMILFNIWVKI. Topologically, residues 206–236 are lumenal; sequence DAHRVVKDYAWYWGDFFFLQDAELTFDGVFN. A helical membrane pass occupies residues 237–257; sequence ISPHPMYSIGYLGYYGLSLIC. At 258–261 the chain is on the cytoplasmic side; the sequence is GDYR. Residues 262-282 traverse the membrane as a helical segment; sequence VLLVSVGGHFLQFLFLKYVES. Topologically, residues 283 to 328 are lumenal; that stretch reads PHIERTYGSDSPSNSTQHQIDDLIAKENYDYSRPLINTGILFENFQ. Residues 329–349 traverse the membrane as a helical segment; sequence FLRFSDYFTVSTILVLFSWFF. Over 350–356 the chain is Cytoplasmic; the sequence is TSKPSNN. Residues 357-377 form a helical membrane-spanning segment; it reads FLFVLTLLTKLTTWLLTSWIL. At 378–403 the chain is on the lumenal side; that stretch reads FQQSNRKWFTRLFLKNGYTQIYSYQQ. Residues 404–424 form a helical membrane-spanning segment; sequence WQFLYNYSLIVTNTLLFLHTL. Topologically, residues 425-435 are cytoplasmic; that stretch reads SELYSIQSSDG. Residues 436-456 traverse the membrane as a helical segment; that stretch reads LNNSHVIFGLLLCAIQIWCNV. Over 457–517 the chain is Lumenal; that stretch reads ETRDAISDFG…VLMTNFSKTN (61 aa). Residues 518–538 form a helical membrane-spanning segment; that stretch reads VTLAVLWTVTNLIFVKLIEEP. The Cytoplasmic portion of the chain corresponds to 539–838; it reads HVSKVYGNGT…DIKEVLDSLN (300 aa).

This sequence belongs to the class VI-like SAM-binding methyltransferase superfamily. CHO2 family.

Its subcellular location is the endoplasmic reticulum membrane. It catalyses the reaction a 1,2-diacyl-sn-glycero-3-phosphoethanolamine + S-adenosyl-L-methionine = a 1,2-diacyl-sn-glycero-3-phospho-N-methylethanolamine + S-adenosyl-L-homocysteine + H(+). The protein operates within phospholipid metabolism; phosphatidylcholine biosynthesis. In terms of biological role, catalyzes the first step of the methylation pathway of phosphatidylcholine biosynthesis, the SAM-dependent methylation of phosphatidylethanolamine (PE) to phosphatidylmonomethylethanolamine (PMME). The sequence is that of Phosphatidylethanolamine N-methyltransferase 1 (CHO2-1) from Vanderwaltozyma polyspora (strain ATCC 22028 / DSM 70294 / BCRC 21397 / CBS 2163 / NBRC 10782 / NRRL Y-8283 / UCD 57-17) (Kluyveromyces polysporus).